The chain runs to 328 residues: Dof zinc finger protein PBF (328 aa).

Positions 33 to 56 (RDPKQTRAMPQIGGSGERKPRPQL) are disordered. Residues 60–114 (LKCPRCDSNNTKFCYYNNYSMSQPRYFCKACRRYWTHGGTLRNVPIGGGCRKNKH) form a Dof-type zinc finger. Zn(2+)-binding residues include Cys-62, Cys-65, Cys-87, and Cys-90. 2 disordered regions span residues 124-144 (TSSS…ASSS) and 306-328 (WNKH…NKGQ).

In terms of assembly, interacts with the bZIP transcription factor Opaque-2/O2. Seed endosperm.

The protein localises to the nucleus. Its function is as follows. Transcription factor that binds specifically to a 5'-AA[AG]G-3' consensus core sequence. May enhance the DNA binding of the bZIP transcription factor Opaque-2 to O2 binding site elements. In Zea mays (Maize), this protein is Dof zinc finger protein PBF (PBF).